A 623-amino-acid polypeptide reads, in one-letter code: Low affinity potassium transport system protein Kup (623 aa).

The next 12 membrane-spanning stretches (helical) occupy residues 10–30 (LSAV…TSPL), 47–67 (PDVV…IVSV), 102–122 (ILVI…VITP), 138–158 (PALD…LFVI), 166–186 (VGKL…LLGL), 214–234 (VSFF…ALYA), 248–268 (WFTV…ALLL), 277–297 (PFFL…ATLA), 338–358 (IYIP…IVGF), 364–384 (LAAA…VLFC), 396–416 (FFVY…FSAN), and 420–440 (LFSG…IMTT).

This sequence belongs to the HAK/KUP transporter (TC 2.A.72) family.

Its subcellular location is the cell inner membrane. It catalyses the reaction K(+)(in) + H(+)(in) = K(+)(out) + H(+)(out). In terms of biological role, responsible for the low-affinity transport of potassium into the cell. Likely operates as a K(+):H(+) symporter. This is Low affinity potassium transport system protein Kup from Yersinia enterocolitica serotype O:8 / biotype 1B (strain NCTC 13174 / 8081).